The primary structure comprises 644 residues: Translation factor guf1, mitochondrial (644 aa).

A mitochondrion-targeting transit peptide spans 1–31; that stretch reads MTLRRFSYTFQARILRGLQARPVFVLPSRSH. One can recognise a tr-type G domain in the interval 51-232; that stretch reads VNIRNWAIIS…AIIQRVPHPI (182 aa). GTP-binding positions include 60–67, 125–129, and 179–182; these read SHIDHGKS, DTPGH, and NKID.

It belongs to the TRAFAC class translation factor GTPase superfamily. Classic translation factor GTPase family. LepA subfamily.

The protein resides in the mitochondrion inner membrane. The catalysed reaction is GTP + H2O = GDP + phosphate + H(+). Its function is as follows. Promotes mitochondrial protein synthesis. May act as a fidelity factor of the translation reaction, by catalyzing a one-codon backward translocation of tRNAs on improperly translocated ribosomes. Binds to mitochondrial ribosomes in a GTP-dependent manner. This Schizosaccharomyces japonicus (strain yFS275 / FY16936) (Fission yeast) protein is Translation factor guf1, mitochondrial (guf1).